Here is a 351-residue protein sequence, read N- to C-terminus: Transaldolase (351 aa).

K138 serves as the catalytic Schiff-base intermediate with substrate.

The protein belongs to the transaldolase family. Type 2 subfamily.

The protein localises to the cytoplasm. The enzyme catalyses D-sedoheptulose 7-phosphate + D-glyceraldehyde 3-phosphate = D-erythrose 4-phosphate + beta-D-fructose 6-phosphate. It functions in the pathway carbohydrate degradation; pentose phosphate pathway; D-glyceraldehyde 3-phosphate and beta-D-fructose 6-phosphate from D-ribose 5-phosphate and D-xylulose 5-phosphate (non-oxidative stage): step 2/3. In terms of biological role, transaldolase is important for the balance of metabolites in the pentose-phosphate pathway. In Neisseria meningitidis serogroup C / serotype 2a (strain ATCC 700532 / DSM 15464 / FAM18), this protein is Transaldolase.